Here is a 381-residue protein sequence, read N- to C-terminus: Neuropeptide Y receptor type 2 (381 aa).

The tract at residues 1–37 (MGPIGTEADENQTVEEIKVEPYGPGHTTPRGELAPDP) is disordered. The Extracellular segment spans residues 1–52 (MGPIGTEADENQTVEEIKVEPYGPGHTTPRGELAPDPEPELIDSTKLTEVRV). N-linked (GlcNAc...) asparagine glycosylation occurs at asparagine 11. Residues 53 to 73 (VLILAYCSIILLGVVGNSLVI) traverse the membrane as a helical segment. Residues 74 to 87 (HVVIKFKSMRTVTN) lie on the Cytoplasmic side of the membrane. A helical membrane pass occupies residues 88 to 108 (FFIANLAVADLLVNTLCLPFT). The Extracellular portion of the chain corresponds to 109-125 (LTYTLMGEWKMGPVLCH). A disulfide bridge links cysteine 124 with cysteine 204. Residues 126–146 (LVPYAQGLAVQVSTVTLTVIA) form a helical membrane-spanning segment. At 147-166 (LDRHRCIVYHLDSKISKQNS) the chain is on the cytoplasmic side. Residues 167-187 (FLIIGLAWGISALLASPLAIF) traverse the membrane as a helical segment. Residues 188–217 (REYSLIEIIPDFEIVACTEKWPGEEKSIYG) are Extracellular-facing. Residues 218-238 (TVYSLSSLLILYVLPLGIISV) form a helical membrane-spanning segment. Topologically, residues 239–269 (SYVRIWSKLKNHVSPGAANDHYHQRRQKTTK) are cytoplasmic. Residues 270–290 (MLVFVVVVFAVSWLPLHAFQL) form a helical membrane-spanning segment. Over 291 to 305 (AVDIDSQVLDLKEYK) the chain is Extracellular. Residues 306–326 (LIFTVFHIIAMCSTFANPLLY) traverse the membrane as a helical segment. Topologically, residues 327–381 (GWMNSNYRKAFLSAFRCQQRLDAIQSEVCVTGKAKTNVEVEKNHGAADSAEATNV) are cytoplasmic. Cysteine 343 carries S-palmitoyl cysteine lipidation.

This sequence belongs to the G-protein coupled receptor 1 family.

The protein resides in the cell membrane. In terms of biological role, receptor for neuropeptide Y and peptide YY. This chain is Neuropeptide Y receptor type 2 (NPY2R), found in Cavia porcellus (Guinea pig).